Here is a 370-residue protein sequence, read N- to C-terminus: DNA replication and repair protein RecF (370 aa).

30–37 is a binding site for ATP; it reads GENAQGKT.

This sequence belongs to the RecF family.

It localises to the cytoplasm. The RecF protein is involved in DNA metabolism; it is required for DNA replication and normal SOS inducibility. RecF binds preferentially to single-stranded, linear DNA. It also seems to bind ATP. This chain is DNA replication and repair protein RecF, found in Listeria innocua serovar 6a (strain ATCC BAA-680 / CLIP 11262).